Here is a 226-residue protein sequence, read N- to C-terminus: uncharacterized protein (226 aa).

This sequence to L.innocua lin2408 and lin2600.

This is an uncharacterized protein from Listeria innocua serovar 6a (strain ATCC BAA-680 / CLIP 11262).